The chain runs to 405 residues: Deoxyguanosinetriphosphate triphosphohydrolase-like protein (405 aa).

Residues 75 to 219 enclose the HD domain; the sequence is RLTHTIEVAQ…AAIADDIAYN (145 aa).

It belongs to the dGTPase family. Type 2 subfamily.

The polypeptide is Deoxyguanosinetriphosphate triphosphohydrolase-like protein (Sinorhizobium medicae (strain WSM419) (Ensifer medicae)).